A 337-amino-acid polypeptide reads, in one-letter code: Ketol-acid reductoisomerase (NADP(+)) (337 aa).

Residues 2–182 (AKIFYDNDAD…GATRAGVLLT (181 aa)) form the KARI N-terminal Rossmann domain. NADP(+)-binding positions include 25–28 (YGSQ), Ser51, Ser53, and 83–86 (DTSQ). Residue His108 is part of the active site. Gly134 contributes to the NADP(+) binding site. A KARI C-terminal knotted domain is found at 183–328 (TFAEETETDL…ANLRKMMPFI (146 aa)). Mg(2+)-binding residues include Asp191, Glu195, Glu227, and Glu231. A substrate-binding site is contributed by Ser252.

Belongs to the ketol-acid reductoisomerase family. Requires Mg(2+) as cofactor.

The enzyme catalyses (2R)-2,3-dihydroxy-3-methylbutanoate + NADP(+) = (2S)-2-acetolactate + NADPH + H(+). It catalyses the reaction (2R,3R)-2,3-dihydroxy-3-methylpentanoate + NADP(+) = (S)-2-ethyl-2-hydroxy-3-oxobutanoate + NADPH + H(+). Its pathway is amino-acid biosynthesis; L-isoleucine biosynthesis; L-isoleucine from 2-oxobutanoate: step 2/4. It functions in the pathway amino-acid biosynthesis; L-valine biosynthesis; L-valine from pyruvate: step 2/4. In terms of biological role, involved in the biosynthesis of branched-chain amino acids (BCAA). Catalyzes an alkyl-migration followed by a ketol-acid reduction of (S)-2-acetolactate (S2AL) to yield (R)-2,3-dihydroxy-isovalerate. In the isomerase reaction, S2AL is rearranged via a Mg-dependent methyl migration to produce 3-hydroxy-3-methyl-2-ketobutyrate (HMKB). In the reductase reaction, this 2-ketoacid undergoes a metal-dependent reduction by NADPH to yield (R)-2,3-dihydroxy-isovalerate. The chain is Ketol-acid reductoisomerase (NADP(+)) from Sorangium cellulosum (strain So ce56) (Polyangium cellulosum (strain So ce56)).